Reading from the N-terminus, the 604-residue chain is Elongation factor 4 (604 aa).

A tr-type G domain is found at 7–189; that stretch reads KRIRNFCIIA…SVVDRVPPPA (183 aa). GTP contacts are provided by residues 19–24 and 136–139; these read DHGKST and NKID.

The protein belongs to the TRAFAC class translation factor GTPase superfamily. Classic translation factor GTPase family. LepA subfamily.

It localises to the cell inner membrane. The enzyme catalyses GTP + H2O = GDP + phosphate + H(+). Its function is as follows. Required for accurate and efficient protein synthesis under certain stress conditions. May act as a fidelity factor of the translation reaction, by catalyzing a one-codon backward translocation of tRNAs on improperly translocated ribosomes. Back-translocation proceeds from a post-translocation (POST) complex to a pre-translocation (PRE) complex, thus giving elongation factor G a second chance to translocate the tRNAs correctly. Binds to ribosomes in a GTP-dependent manner. This is Elongation factor 4 from Synechococcus sp. (strain CC9311).